The chain runs to 373 residues: 3-isopropylmalate dehydrogenase gloI (373 aa).

3 residues coordinate substrate: S92, R98, and R108. Mg(2+)-binding residues include D228, D253, and D257. NADP(+)-binding positions include 294-300 (HGSAPDI) and N307.

It belongs to the isocitrate and isopropylmalate dehydrogenases family. In terms of assembly, homodimer. It depends on Mg(2+) as a cofactor. The cofactor is Mn(2+).

The catalysed reaction is (2R,3S)-3-isopropylmalate + NAD(+) = 4-methyl-2-oxopentanoate + CO2 + NADH. It functions in the pathway mycotoxin biosynthesis. Functionally, 3-isopropylmalate dehydrogenase; part of the gene cluster that mediates the biosynthesis of pneumocandins, lipohexapeptides of the echinocandin family that prevent fungal cell wall formation by non-competitive inhibition of beta-1,3-glucan synthase. The 10,12-dimethylmyristoyl side chain is synthesized by the reducing polyketide synthase gloL/GLPKS4. The thioesterase gloN/GLHYD exclusively interacts with gloL/GLPKS4 to maintain turnover of the polyketide side chain. The 10R,12S-dimethylmyristic acid is then transferred to the first thiolation domain of the nonribosomal peptide synthetase gloA/GLNRPS4 by the acyl-AMP ligase gloD/GLligase, followed by its acylation to L-ornithine to trigger elongation of the cyclic hexapeptide. L-ornithine, 4R-hydroxyl-L-proline (generated from L-proline by the dioxygenase gloF/GLOXY2), 3S-hydroxyl-L-homotyrosine (generated by gloG/GLHtyB, gloH/GLHtyA, gloI/GLHtyC, gloJ/GLHtyD and hydroxylated at C-3 by the dioxygenase gloM/GLOXY1), 3R-hydroxyl-L-glutamine (generated from L-glutamine probably by the dioxygenase gloE/GLOXY3) and 3S-hydroxyl-L-proline (generated from L-proline by the dioxygenase gloF/GLOXY2 to yield pneumocandin B0), or 3S-hydroxyl-4S-methyl-L-proline (generated from L-leucine by the dioxygenase gloC/GLOXY4 to yield pneumocandin A0) are sequentially added to the growing chain. The last C domain of gloA/GLNRPS4 is proposed to be responsible for cyclization by condensation to form the peptide bond between L-ornithine and 3S-hydroxyl-4S-methyl-L-proline (for pneumocandin A0) or 3S-hydroxyl-L-proline (for pneumocandin B0). Finally, the subsequent C-4 hydroxylation of 3S-hydroxyl-L-homotyrosine and L-ornithine dihydroxylation at C-4 and C-5 are performed by the cytochrome P450 monooxygenases gloP/GLP450-1 and gloO/GLP450-2, respectively. The sequence is that of 3-isopropylmalate dehydrogenase gloI from Glarea lozoyensis (strain ATCC 20868 / MF5171).